The following is a 69-amino-acid chain: Alpha-conotoxin-like Tx1 (69 aa).

The N-terminal stretch at 1-21 (MGMRMMFVVFLLVVLASTVVS) is a signal peptide. The propeptide occupies 22–49 (STSGRRAFHGRNAAAKASGLVSLTDRRP). Intrachain disulfides connect cysteine 51–cysteine 57 and cysteine 52–cysteine 65. The ser-Xaa-Pro motif, crucial for potent interaction with nAChR stretch occupies residues 53–55 (SDP). Glycine amide is present on glycine 66.

This sequence belongs to the conotoxin A superfamily. In terms of tissue distribution, expressed by the venom duct.

The protein resides in the secreted. In terms of biological role, alpha-conotoxins act on postsynaptic membranes, they bind to the nicotinic acetylcholine receptors (nAChR) and thus inhibit them. This is Alpha-conotoxin-like Tx1 from Conus textile (Cloth-of-gold cone).